Consider the following 340-residue polypeptide: GTP 3',8-cyclase (340 aa).

Residues 8 to 227 (KLGRPIRDLR…TMIEQHFEID (220 aa)) form the Radical SAM core domain. Position 17 (Arg-17) interacts with GTP. Residues Cys-24 and Cys-28 each coordinate [4Fe-4S] cluster. Tyr-30 serves as a coordination point for S-adenosyl-L-methionine. [4Fe-4S] cluster is bound at residue Cys-31. Position 71 (Arg-71) interacts with GTP. An S-adenosyl-L-methionine-binding site is contributed by Gly-75. Thr-102 lines the GTP pocket. S-adenosyl-L-methionine is bound at residue Ser-126. A GTP-binding site is contributed by Lys-163. S-adenosyl-L-methionine is bound at residue Met-197. Positions 261 and 264 each coordinate [4Fe-4S] cluster. Residue 266-268 (RAR) coordinates GTP. Cys-278 serves as a coordination point for [4Fe-4S] cluster.

It belongs to the radical SAM superfamily. MoaA family. Monomer and homodimer. It depends on [4Fe-4S] cluster as a cofactor.

It carries out the reaction GTP + AH2 + S-adenosyl-L-methionine = (8S)-3',8-cyclo-7,8-dihydroguanosine 5'-triphosphate + 5'-deoxyadenosine + L-methionine + A + H(+). It functions in the pathway cofactor biosynthesis; molybdopterin biosynthesis. Catalyzes the cyclization of GTP to (8S)-3',8-cyclo-7,8-dihydroguanosine 5'-triphosphate. The chain is GTP 3',8-cyclase from Staphylococcus aureus (strain Mu3 / ATCC 700698).